Consider the following 334-residue polypeptide: Aspartate carbamoyltransferase catalytic subunit (334 aa).

Arg-71 and Thr-72 together coordinate carbamoyl phosphate. Position 99 (Lys-99) interacts with L-aspartate. 3 residues coordinate carbamoyl phosphate: Arg-121, His-151, and Gln-154. Residues Arg-184 and Arg-239 each contribute to the L-aspartate site. Gly-280 and Pro-281 together coordinate carbamoyl phosphate.

Belongs to the aspartate/ornithine carbamoyltransferase superfamily. ATCase family. Heterododecamer (2C3:3R2) of six catalytic PyrB chains organized as two trimers (C3), and six regulatory PyrI chains organized as three dimers (R2).

It catalyses the reaction carbamoyl phosphate + L-aspartate = N-carbamoyl-L-aspartate + phosphate + H(+). It participates in pyrimidine metabolism; UMP biosynthesis via de novo pathway; (S)-dihydroorotate from bicarbonate: step 2/3. Its function is as follows. Catalyzes the condensation of carbamoyl phosphate and aspartate to form carbamoyl aspartate and inorganic phosphate, the committed step in the de novo pyrimidine nucleotide biosynthesis pathway. This Pseudomonas syringae pv. tomato (strain ATCC BAA-871 / DC3000) protein is Aspartate carbamoyltransferase catalytic subunit.